We begin with the raw amino-acid sequence, 341 residues long: tRNA N6-adenosine threonylcarbamoyltransferase (341 aa).

Residues His-111 and His-115 each contribute to the Fe cation site. Residues 134–138, Asp-167, Gly-180, and Asn-276 contribute to the substrate site; that span reads LVSGG. Asp-304 is a Fe cation binding site.

This sequence belongs to the KAE1 / TsaD family. The cofactor is Fe(2+).

It is found in the cytoplasm. It carries out the reaction L-threonylcarbamoyladenylate + adenosine(37) in tRNA = N(6)-L-threonylcarbamoyladenosine(37) in tRNA + AMP + H(+). In terms of biological role, required for the formation of a threonylcarbamoyl group on adenosine at position 37 (t(6)A37) in tRNAs that read codons beginning with adenine. Is involved in the transfer of the threonylcarbamoyl moiety of threonylcarbamoyl-AMP (TC-AMP) to the N6 group of A37, together with TsaE and TsaB. TsaD likely plays a direct catalytic role in this reaction. In Pseudomonas paraeruginosa (strain DSM 24068 / PA7) (Pseudomonas aeruginosa (strain PA7)), this protein is tRNA N6-adenosine threonylcarbamoyltransferase.